The sequence spans 131 residues: Interleukin-13 (131 aa).

Positions 1–18 (MALWVTAVLALACLGGLA) are cleaved as a signal peptide. N-linked (GlcNAc...) asparagine glycosylation is found at N42, N52, and N75. Cystine bridges form between C51–C79 and C67–C93.

It belongs to the IL-4/IL-13 family. Interacts with IL13RA2.

The protein localises to the secreted. Functionally, cytokine that plays important roles in allergic inflammation and immune response to parasite infection. Synergizes with IL2 in regulating interferon-gamma synthesis. Stimulates B-cell proliferation, and activation of eosinophils, basophils, and mast cells. Plays an important role in controlling IL33 activity by modulating the production of transmembrane and soluble forms of interleukin-1 receptor-like 1/IL1RL1. Displays the capacity to antagonize Th1-driven proinflammatory immune response and downregulates synthesis of many proinflammatory cytokines including IL1, IL6, IL10, IL12 and TNF-alpha through a mechanism that partially involves suppression of NF-kappa-B. Also functions on nonhematopoietic cells, including endothelial cells where it induces vascular cell adhesion protein 1/VCAM1, which is important in the recruitment of eosinophils. Exerts its biological effects through its receptors which comprises the IL4R chain and the IL13RA1 chain, to activate JAK1 and TYK2, leading to the activation of STAT6. Aside from IL13RA1, another receptor IL13RA2 acts as a high affinity decoy for IL13 and mediates internalization and depletion of extracellular IL13. The chain is Interleukin-13 (Il13) from Mus musculus (Mouse).